Here is a 329-residue protein sequence, read N- to C-terminus: 4-hydroxythreonine-4-phosphate dehydrogenase (329 aa).

Substrate-binding residues include His136 and Thr137. A divalent metal cation is bound by residues His166, His211, and His266. Substrate is bound by residues Lys274, Asn283, and Arg292.

The protein belongs to the PdxA family. Homodimer. Zn(2+) is required as a cofactor. The cofactor is Mg(2+). Co(2+) serves as cofactor.

The protein localises to the cytoplasm. It catalyses the reaction 4-(phosphooxy)-L-threonine + NAD(+) = 3-amino-2-oxopropyl phosphate + CO2 + NADH. It functions in the pathway cofactor biosynthesis; pyridoxine 5'-phosphate biosynthesis; pyridoxine 5'-phosphate from D-erythrose 4-phosphate: step 4/5. Functionally, catalyzes the NAD(P)-dependent oxidation of 4-(phosphooxy)-L-threonine (HTP) into 2-amino-3-oxo-4-(phosphooxy)butyric acid which spontaneously decarboxylates to form 3-amino-2-oxopropyl phosphate (AHAP). This Escherichia coli O139:H28 (strain E24377A / ETEC) protein is 4-hydroxythreonine-4-phosphate dehydrogenase.